The following is a 442-amino-acid chain: tRNA modification GTPase MnmE (442 aa).

(6S)-5-formyl-5,6,7,8-tetrahydrofolate is bound by residues arginine 21, glutamate 79, and lysine 118. The TrmE-type G domain maps to 214 to 367 (GFKIAIVGKP…LKEELQNYLN (154 aa)). Asparagine 224 is a binding site for K(+). Residues 224–229 (NVGKSS), 243–249 (SDIAGTT), and 268–271 (DTAG) contribute to the GTP site. Serine 228 is a binding site for Mg(2+). K(+) contacts are provided by serine 243, isoleucine 245, and threonine 248. Residue threonine 249 coordinates Mg(2+). Residue lysine 442 coordinates (6S)-5-formyl-5,6,7,8-tetrahydrofolate.

Belongs to the TRAFAC class TrmE-Era-EngA-EngB-Septin-like GTPase superfamily. TrmE GTPase family. In terms of assembly, homodimer. Heterotetramer of two MnmE and two MnmG subunits. The cofactor is K(+).

The protein resides in the cytoplasm. Functionally, exhibits a very high intrinsic GTPase hydrolysis rate. Involved in the addition of a carboxymethylaminomethyl (cmnm) group at the wobble position (U34) of certain tRNAs, forming tRNA-cmnm(5)s(2)U34. The protein is tRNA modification GTPase MnmE of Campylobacter jejuni subsp. jejuni serotype O:23/36 (strain 81-176).